The chain runs to 382 residues: uncharacterized protein (382 aa).

12 helical membrane passes run 8–28, 45–65, 75–95, 102–122, 131–151, 157–177, 204–224, 231–251, 270–290, 291–311, 325–345, and 349–369; these read VMLL…LNTL, MVSS…GYLI, YLAS…VGFW, FIAG…LMCS, LLAA…LLVS, LLHV…PLLF, LGVN…GLMP, GMAN…GILG, VQVF…AMAP, ALFI…AWAC, ALLL…AMLM, and SDNL…LMLL.

This sequence belongs to the major facilitator superfamily. YcaD (TC 2.A.1.26) family.

Its subcellular location is the cell inner membrane. This is an uncharacterized protein from Salmonella enteritidis PT4 (strain P125109).